We begin with the raw amino-acid sequence, 171 residues long: Co-chaperone protein HscB (171 aa).

Positions 2–74 constitute a J domain; it reads DYFTLFGLPA…LTRAEYLLSL (73 aa).

It belongs to the HscB family. In terms of assembly, interacts with HscA and stimulates its ATPase activity. Interacts with IscU.

Its function is as follows. Co-chaperone involved in the maturation of iron-sulfur cluster-containing proteins. Seems to help targeting proteins to be folded toward HscA. This chain is Co-chaperone protein HscB, found in Salmonella heidelberg (strain SL476).